Reading from the N-terminus, the 153-residue chain is CASP-like protein 5B1 (153 aa).

Over methionine 1–glutamine 20 the chain is Cytoplasmic. The chain crosses the membrane as a helical span at residues leucine 21–threonine 41. Alanine 42 is a topological domain (extracellular). Residues phenylalanine 43–leucine 63 form a helical membrane-spanning segment. The Cytoplasmic segment spans residues aspartate 64 to serine 76. The helical transmembrane segment at alanine 77–alanine 97 threads the bilayer. The Extracellular segment spans residues serine 98–alanine 128. The chain crosses the membrane as a helical span at residues isoleucine 129–leucine 149. Topologically, residues leucine 150–leucine 153 are cytoplasmic.

This sequence belongs to the Casparian strip membrane proteins (CASP) family. In terms of assembly, homodimer and heterodimers.

The protein localises to the cell membrane. This is CASP-like protein 5B1 from Oryza sativa subsp. indica (Rice).